Here is a 455-residue protein sequence, read N- to C-terminus: tRNA modification GTPase MnmE (455 aa).

Positions 22, 85, and 124 each coordinate (6S)-5-formyl-5,6,7,8-tetrahydrofolate. In terms of domain architecture, TrmE-type G spans 220-377; sequence GIYTVIVGRP…VEKAIKEAIL (158 aa). Asn230 is a binding site for K(+). GTP is bound by residues 230-235, 249-255, and 274-277; these read NVGKSS, TDIPGTT, and DTAG. A Mg(2+)-binding site is contributed by Ser234. Residues Thr249, Ile251, and Thr254 each contribute to the K(+) site. Thr255 contributes to the Mg(2+) binding site. Residue Lys455 coordinates (6S)-5-formyl-5,6,7,8-tetrahydrofolate.

The protein belongs to the TRAFAC class TrmE-Era-EngA-EngB-Septin-like GTPase superfamily. TrmE GTPase family. In terms of assembly, homodimer. Heterotetramer of two MnmE and two MnmG subunits. It depends on K(+) as a cofactor.

The protein resides in the cytoplasm. Its function is as follows. Exhibits a very high intrinsic GTPase hydrolysis rate. Involved in the addition of a carboxymethylaminomethyl (cmnm) group at the wobble position (U34) of certain tRNAs, forming tRNA-cmnm(5)s(2)U34. This chain is tRNA modification GTPase MnmE, found in Caldicellulosiruptor saccharolyticus (strain ATCC 43494 / DSM 8903 / Tp8T 6331).